Here is a 215-residue protein sequence, read N- to C-terminus: Proteasome subunit beta inpE (215 aa).

This sequence belongs to the peptidase T1B family.

It is found in the cytoplasm. Its subcellular location is the nucleus. It catalyses the reaction Cleavage of peptide bonds with very broad specificity.. Proteasome subunit beta type-6; part of the inp gene cluster that mediates the biosynthesis of fellutamide B, a mycotoxin that acts as a proteasome inhibitor. In the first step of fellutabmide B biosynthesis inpC activates 3-hydroxydodecanoic acid to generate 3-hydroxydodecanoyl-AMP that is then loaded onto the T0 domain of inpB. The 3-hydroxydodecanoyl-S-phosphopantetheinyl-T0 is sequentially extended with L-Asn and L-Gln by the two CAT modules of inpB. The linear lipodipeptide from inpB is then transferred onto inpA for the addition of the third amino acid, L-Leu. Reductive releasing of the lipotripeptide by the TE domain of inpA produces (2S)-fellutamide B. InpF might be involved in the release and transfer of the lipodipeptide from inpB to inpA. The inp cluster-encoded proteasome subunit inpE confers resistance to internally produced fellutamides. The MFS efflux transporter inpD may contribute to fellutamide resistance as well. This is Proteasome subunit beta inpE (inpE) from Emericella nidulans (strain FGSC A4 / ATCC 38163 / CBS 112.46 / NRRL 194 / M139) (Aspergillus nidulans).